Reading from the N-terminus, the 751-residue chain is Semaphorin-3C (751 aa).

The N-terminal stretch at 1 to 21 (MAFRTICVLVGVFICSICVKG) is a signal peptide. A Sema domain is found at 28–511 (RVYLTFDELR…SNEGVSQVSL (484 aa)). Residue N81 is glycosylated (N-linked (GlcNAc...) asparagine). A disulfide bond links C101 and C112. A glycan (N-linked (GlcNAc...) asparagine) is linked at N123. A disulfide bond links C130 and C139. N252 and N268 each carry an N-linked (GlcNAc...) asparagine glycan. Intrachain disulfides connect C266–C378 and C290–C338. Residue N465 is glycosylated (N-linked (GlcNAc...) asparagine). A disulfide bond links C514 and C532. The region spanning 571 to 655 (AYRNAAEIVQ…TENSFKQTIA (85 aa)) is the Ig-like C2-type domain. N-linked (GlcNAc...) asparagine glycans are attached at residues N585 and N586. The cysteines at positions 592 and 643 are disulfide-linked. The segment covering 712–731 (TRQQHQQGDESQKMRGDYGK) has biased composition (basic and acidic residues). A disordered region spans residues 712-751 (TRQQHQQGDESQKMRGDYGKLKALINSRKSRNRRNQLPES).

Belongs to the semaphorin family. As to quaternary structure, interacts with PLXND1.

It is found in the secreted. Its function is as follows. Binds to plexin family members and plays an important role in the regulation of developmental processes. Required for normal cardiovascular development during embryogenesis. Functions as attractant for growing axons, and thereby plays an important role in axon growth and axon guidance. The protein is Semaphorin-3C (SEMA3C) of Pongo abelii (Sumatran orangutan).